The chain runs to 449 residues: Dynein regulatory complex protein 10 (449 aa).

Residues 90–125 (AVREHEDLCQVLLENVRCLKEKERQLQEQKEAEEEG) adopt a coiled-coil conformation. The IQ domain occupies 400 to 429 (MVRAATLIQALWKGYLVRSLLRSKKKRGKG). Residues 422 to 449 (SKKKRGKGKAKDKEKGKQKGKEKGKGKK) are disordered. Residues 430–449 (KAKDKEKGKQKGKEKGKGKK) show a composition bias toward basic and acidic residues.

This sequence belongs to the DRC10 family. Component of the nexin-dynein regulatory complex (N-DRC). Interacts with CFAP52.

The protein resides in the cytoplasm. The protein localises to the cytoskeleton. It localises to the flagellum axoneme. Its function is as follows. Component of the nexin-dynein regulatory complex (N-DRC), a key regulator of ciliary/flagellar motility which maintains the alignment and integrity of the distal axoneme and regulates microtubule sliding in motile axonemes. The sequence is that of Dynein regulatory complex protein 10 (IQCD) from Homo sapiens (Human).